The primary structure comprises 462 residues: Glutamate--tRNA ligase 1 (462 aa).

The 'HIGH' region signature appears at 8-18; the sequence is PSPTGYLHIGG. The 'KMSKS' region signature appears at 237–241; it reads KLSKR. Lys240 is an ATP binding site.

The protein belongs to the class-I aminoacyl-tRNA synthetase family. Glutamate--tRNA ligase type 1 subfamily. As to quaternary structure, monomer.

It is found in the cytoplasm. It catalyses the reaction tRNA(Glu) + L-glutamate + ATP = L-glutamyl-tRNA(Glu) + AMP + diphosphate. Catalyzes the attachment of glutamate to tRNA(Glu) in a two-step reaction: glutamate is first activated by ATP to form Glu-AMP and then transferred to the acceptor end of tRNA(Glu). The sequence is that of Glutamate--tRNA ligase 1 from Sulfurimonas denitrificans (strain ATCC 33889 / DSM 1251) (Thiomicrospira denitrificans (strain ATCC 33889 / DSM 1251)).